The sequence spans 223 residues: Putative synaptogyrin-2 like protein (223 aa).

Met1 carries the N-acetylmethionine modification. Position 3 is a phosphoserine (Ser3). One can recognise an MARVEL domain in the interval 20–170 (FLTQPQVVAR…LASLTYQRYK (151 aa)). 4 helical membrane-spanning segments follow: residues 26 to 46 (VVAR…IYGE), 71 to 91 (GSAI…DAYF), 104 to 124 (VIGD…GFCF), and 146 to 166 (AAIT…SLTY). The segment at 197-223 (ASVDNYQQPPFTQNAETTEGYQPPPVY) is disordered. Positions 200–216 (DNYQQPPFTQNAETTEG) are enriched in polar residues.

This sequence belongs to the synaptogyrin family.

The protein localises to the membrane. This chain is Putative synaptogyrin-2 like protein, found in Homo sapiens (Human).